A 246-amino-acid polypeptide reads, in one-letter code: Probable phosphatase AHA_1344 (246 aa).

9 residues coordinate Zn(2+): His-8, His-10, His-16, His-41, Glu-74, His-102, His-132, Asp-193, and His-195.

It belongs to the PHP family. It depends on Zn(2+) as a cofactor.

This chain is Probable phosphatase AHA_1344, found in Aeromonas hydrophila subsp. hydrophila (strain ATCC 7966 / DSM 30187 / BCRC 13018 / CCUG 14551 / JCM 1027 / KCTC 2358 / NCIMB 9240 / NCTC 8049).